A 148-amino-acid chain; its full sequence is FAD synthase (148 aa).

ATP is bound by residues 14–15 (VF), 19–22 (HAGH), and Asp100.

This sequence belongs to the archaeal FAD synthase family. In terms of assembly, homodimer. Requires a divalent metal cation as cofactor.

It catalyses the reaction FMN + ATP + H(+) = FAD + diphosphate. Its pathway is cofactor biosynthesis; FAD biosynthesis; FAD from FMN: step 1/1. Functionally, catalyzes the transfer of the AMP portion of ATP to flavin mononucleotide (FMN) to produce flavin adenine dinucleotide (FAD) coenzyme. The chain is FAD synthase from Pyrococcus horikoshii (strain ATCC 700860 / DSM 12428 / JCM 9974 / NBRC 100139 / OT-3).